A 106-amino-acid chain; its full sequence is Glutaredoxin-1 (106 aa).

A2 is modified (N-acetylalanine). Positions 3-106 (QAFVNSKIQP…TRLQQIGALK (104 aa)) constitute a Glutaredoxin domain. The residue at position 9 (K9) is an N6-succinyllysine. Disulfide bonds link C23–C26 and C79–C83.

This sequence belongs to the glutaredoxin family.

It localises to the cytoplasm. Its function is as follows. Has a glutathione-disulfide oxidoreductase activity in the presence of NADPH and glutathione reductase. Reduces low molecular weight disulfides and proteins. The polypeptide is Glutaredoxin-1 (GLRX) (Sus scrofa (Pig)).